Consider the following 265-residue polypeptide: Undecaprenyl-diphosphatase (265 aa).

8 helical membrane-spanning segments follow: residues 1–21, 40–60, 87–107, 113–133, 151–173, 188–208, 214–234, and 244–264; these read MDWL…FLPI, GLAF…LAFH, WAVI…ENVI, ASLV…WADV, IIGF…TITA, SFLL…VELI, VAWG…WLCI, and IGML…LVWV.

The protein belongs to the UppP family.

The protein localises to the cell inner membrane. The catalysed reaction is di-trans,octa-cis-undecaprenyl diphosphate + H2O = di-trans,octa-cis-undecaprenyl phosphate + phosphate + H(+). Functionally, catalyzes the dephosphorylation of undecaprenyl diphosphate (UPP). Confers resistance to bacitracin. The polypeptide is Undecaprenyl-diphosphatase (Chromohalobacter salexigens (strain ATCC BAA-138 / DSM 3043 / CIP 106854 / NCIMB 13768 / 1H11)).